The primary structure comprises 398 residues: 4-hydroxy-3-methylbut-2-en-1-yl diphosphate synthase (ferredoxin) (398 aa).

Positions 306, 309, 340, and 347 each coordinate [4Fe-4S] cluster.

This sequence belongs to the IspG family. [4Fe-4S] cluster is required as a cofactor.

It carries out the reaction (2E)-4-hydroxy-3-methylbut-2-enyl diphosphate + 2 oxidized [2Fe-2S]-[ferredoxin] + H2O = 2-C-methyl-D-erythritol 2,4-cyclic diphosphate + 2 reduced [2Fe-2S]-[ferredoxin] + H(+). The protein operates within isoprenoid biosynthesis; isopentenyl diphosphate biosynthesis via DXP pathway; isopentenyl diphosphate from 1-deoxy-D-xylulose 5-phosphate: step 5/6. Its function is as follows. Converts 2C-methyl-D-erythritol 2,4-cyclodiphosphate (ME-2,4cPP) into 1-hydroxy-2-methyl-2-(E)-butenyl 4-diphosphate. This chain is 4-hydroxy-3-methylbut-2-en-1-yl diphosphate synthase (ferredoxin), found in Synechococcus sp. (strain CC9311).